We begin with the raw amino-acid sequence, 245 residues long: Orotidine 5'-phosphate decarboxylase (245 aa).

Substrate contacts are provided by residues Asp22, Lys44, 71–80 (DLKFHDIPNT), Thr131, Arg192, Gln201, Gly221, and Arg222. Lys73 (proton donor) is an active-site residue.

Belongs to the OMP decarboxylase family. Type 1 subfamily. As to quaternary structure, homodimer.

The catalysed reaction is orotidine 5'-phosphate + H(+) = UMP + CO2. It functions in the pathway pyrimidine metabolism; UMP biosynthesis via de novo pathway; UMP from orotate: step 2/2. Functionally, catalyzes the decarboxylation of orotidine 5'-monophosphate (OMP) to uridine 5'-monophosphate (UMP). This is Orotidine 5'-phosphate decarboxylase from Escherichia coli O139:H28 (strain E24377A / ETEC).